A 113-amino-acid chain; its full sequence is U11-theraphotoxin-Hhn1a (113 aa).

The N-terminal stretch at 1–21 is a signal peptide; the sequence is MDTVRVAFLLVLVLAVSLGQA. Positions 22–74 are excised as a propeptide; the sequence is DKDENRMEMQEKTEQGKSYLDFAENLLLQKLEELEAKLLEEDSEESRNSRQKR. Residues 60–69 are compositionally biased toward basic and acidic residues; that stretch reads LEEDSEESRN. The interval 60–83 is disordered; that stretch reads LEEDSEESRNSRQKRCIGEGVPCD. 3 cysteine pairs are disulfide-bonded: C75–C90, C82–C95, and C89–C110.

The protein belongs to the neurotoxin 14 (magi-1) family. 01 (HNTX-16) subfamily. In terms of tissue distribution, expressed by the venom gland.

It localises to the secreted. Functionally, probable ion channel inhibitor. The protein is U11-theraphotoxin-Hhn1a of Cyriopagopus hainanus (Chinese bird spider).